The sequence spans 68 residues: Large ribosomal subunit protein bL33c (68 aa).

The protein belongs to the bacterial ribosomal protein bL33 family.

The protein localises to the plastid. It localises to the chloroplast. This Piper cenocladum (Ant piper) protein is Large ribosomal subunit protein bL33c.